A 465-amino-acid polypeptide reads, in one-letter code: uncharacterized protein (465 aa).

Disordered regions lie at residues 95 to 173 (STST…RKDP), 407 to 426 (QEME…KSDK), and 443 to 465 (ANPI…SSKK). Residues 118 to 137 (KTGSKKVTRSKKSKKTKRRS) are compositionally biased toward basic residues. Residues 138–150 (STTVTTTTISNSK) show a composition bias toward low complexity. Residues 153–173 (TPDKDKDSKDQRKQRTKRKDP) show a composition bias toward basic and acidic residues. The span at 451-465 (MARRNRRSKGSSSKK) shows a compositional bias: basic residues.

This is an uncharacterized protein from Caenorhabditis elegans.